The sequence spans 311 residues: 4-hydroxy-tetrahydrodipicolinate synthase (311 aa).

Thr-51 contributes to the pyruvate binding site. The active-site Proton donor/acceptor is the Tyr-140. Catalysis depends on Lys-168, which acts as the Schiff-base intermediate with substrate. A pyruvate-binding site is contributed by Ile-209.

The protein belongs to the DapA family. As to quaternary structure, homotetramer; dimer of dimers.

It localises to the cytoplasm. It carries out the reaction L-aspartate 4-semialdehyde + pyruvate = (2S,4S)-4-hydroxy-2,3,4,5-tetrahydrodipicolinate + H2O + H(+). It participates in amino-acid biosynthesis; L-lysine biosynthesis via DAP pathway; (S)-tetrahydrodipicolinate from L-aspartate: step 3/4. In terms of biological role, catalyzes the condensation of (S)-aspartate-beta-semialdehyde [(S)-ASA] and pyruvate to 4-hydroxy-tetrahydrodipicolinate (HTPA). The sequence is that of 4-hydroxy-tetrahydrodipicolinate synthase from Streptococcus pneumoniae (strain ATCC 700669 / Spain 23F-1).